We begin with the raw amino-acid sequence, 162 residues long: MNVYEGSLVGTGLKAALVVARFNSLVTEQLLVGAADALRRHGVADGDVDVFRCPGTFELPAVLRRVVATGRYDAVVALGAVIRGGTPHFEYVSAEVTKGVAHVAMEAGCAVTMGVLTCDSMEQALERAGVKAGNKGADAAAAAVEQANVLRAIARAPARKAE.

Residues phenylalanine 22, 56 to 58 (TFE), and 80 to 82 (AVI) each bind 5-amino-6-(D-ribitylamino)uracil. A (2S)-2-hydroxy-3-oxobutyl phosphate-binding site is contributed by 85–86 (GT). Histidine 88 acts as the Proton donor in catalysis. Methionine 113 contacts 5-amino-6-(D-ribitylamino)uracil. Arginine 127 lines the (2S)-2-hydroxy-3-oxobutyl phosphate pocket.

It belongs to the DMRL synthase family.

It carries out the reaction (2S)-2-hydroxy-3-oxobutyl phosphate + 5-amino-6-(D-ribitylamino)uracil = 6,7-dimethyl-8-(1-D-ribityl)lumazine + phosphate + 2 H2O + H(+). Its pathway is cofactor biosynthesis; riboflavin biosynthesis; riboflavin from 2-hydroxy-3-oxobutyl phosphate and 5-amino-6-(D-ribitylamino)uracil: step 1/2. In terms of biological role, catalyzes the formation of 6,7-dimethyl-8-ribityllumazine by condensation of 5-amino-6-(D-ribitylamino)uracil with 3,4-dihydroxy-2-butanone 4-phosphate. This is the penultimate step in the biosynthesis of riboflavin. The protein is 6,7-dimethyl-8-ribityllumazine synthase of Anaeromyxobacter dehalogenans (strain 2CP-1 / ATCC BAA-258).